The chain runs to 455 residues: Argininosuccinate lyase (455 aa).

The protein belongs to the lyase 1 family. Argininosuccinate lyase subfamily.

It is found in the cytoplasm. It catalyses the reaction 2-(N(omega)-L-arginino)succinate = fumarate + L-arginine. The protein operates within amino-acid biosynthesis; L-arginine biosynthesis; L-arginine from L-ornithine and carbamoyl phosphate: step 3/3. In Caulobacter vibrioides (strain ATCC 19089 / CIP 103742 / CB 15) (Caulobacter crescentus), this protein is Argininosuccinate lyase.